Reading from the N-terminus, the 355-residue chain is tRNA uridine(34) hydroxylase (355 aa).

One can recognise a Rhodanese domain in the interval 146 to 240 (KDPDALFVDM…YVRTAKKKDL (95 aa)). Catalysis depends on C200, which acts as the Cysteine persulfide intermediate.

Belongs to the TrhO family.

The catalysed reaction is uridine(34) in tRNA + AH2 + O2 = 5-hydroxyuridine(34) in tRNA + A + H2O. In terms of biological role, catalyzes oxygen-dependent 5-hydroxyuridine (ho5U) modification at position 34 in tRNAs. The chain is tRNA uridine(34) hydroxylase from Hamiltonella defensa subsp. Acyrthosiphon pisum (strain 5AT).